A 1061-amino-acid polypeptide reads, in one-letter code: Calcium-transporting ATPase 4, endoplasmic reticulum-type (1061 aa).

The segment at 1-21 (MGKGGEDCGNKQTNSSELVKS) is disordered. The Cytoplasmic portion of the chain corresponds to 1–70 (MGKGGEDCGN…NELEKPEGTS (70 aa)). Residues 71–91 (IFKLILEQFNDTLVRILLAAA) form a helical membrane-spanning segment. Topologically, residues 92-115 (VISFVLAFFDGDEGGEMGITAFVE) are lumenal. The chain crosses the membrane as a helical span at residues 116–135 (PLVIFLILIVNAIVGIWQET). Over 136-278 (NAEKALEALK…EEDTPLKKKL (143 aa)) the chain is Cytoplasmic. A helical transmembrane segment spans residues 279-298 (NEFGEVLTMIIGLICALVWL). At 299-327 (INVKYFLSWEYVDGWPRNFKFSFEKCTYY) the chain is on the lumenal side. The chain crosses the membrane as a helical span at residues 328–345 (FEIAVALAVAAIPEGLPA). Residues Val336, Ala337, Ile339, and Glu341 each coordinate Ca(2+). At 346 to 786 (VITTCLALGT…GEGRSIYNNM (441 aa)) the chain is on the cytoplasmic side. The active-site 4-aspartylphosphate intermediate is the Asp383. Residues Asp731 and Asp735 each coordinate Mg(2+). A helical membrane pass occupies residues 787-806 (KAFIRYMISSNIGEVASIFL). Positions 797 and 800 each coordinate Ca(2+). Over 807 to 816 (TAALGIPEGM) the chain is Lumenal. The chain crosses the membrane as a helical span at residues 817–837 (IPVQLLWVNLVTDGPPATALG). Ca(2+) is bound by residues Asn825, Thr828, and Asp829. The Cytoplasmic segment spans residues 838–857 (FNPPDKDIMKKPPRRSDDSL). A helical transmembrane segment spans residues 858–880 (ITAWILFRYMVIGLYVGVATVGV). At 881 to 950 (FIIWYTHNSF…YFQQGKIKAS (70 aa)) the chain is on the lumenal side. A helical membrane pass occupies residues 951–970 (TLSLSVLVAIEMFNSLNALS). A Ca(2+)-binding site is contributed by Glu961. Topologically, residues 971–983 (EDGSLVTMPPWVN) are cytoplasmic. Residues 984–1002 (PWLLLAMAVSFGLHFVILY) form a helical membrane-spanning segment. Residues 1003–1017 (VPFLAQVFGIVPLSL) are Lumenal-facing. Residues 1018–1038 (NEWLLVLAVSLPVILIDEVLK) form a helical membrane-spanning segment. The Cytoplasmic portion of the chain corresponds to 1039–1061 (FVGRCTSGYRYSPRTPSAKQKEE).

The protein belongs to the cation transport ATPase (P-type) (TC 3.A.3) family. Type IIA subfamily.

The protein localises to the membrane. It carries out the reaction Ca(2+)(in) + ATP + H2O = Ca(2+)(out) + ADP + phosphate + H(+). This magnesium-dependent enzyme catalyzes the hydrolysis of ATP coupled with the translocation of calcium from the cytosol to an endomembrane compartment. This chain is Calcium-transporting ATPase 4, endoplasmic reticulum-type (ECA4), found in Arabidopsis thaliana (Mouse-ear cress).